The following is a 431-amino-acid chain: Beta-lactamase hydrolase-like protein (431 aa).

Positions 212, 214, and 286 each coordinate Zn(2+). Aspartate 309 is a binding site for substrate.

This sequence belongs to the metallo-beta-lactamase superfamily. Zn(2+) is required as a cofactor.

Could play a role in cell adherence or biofilm development. The protein is Beta-lactamase hydrolase-like protein of Agrobacterium fabrum (strain C58 / ATCC 33970) (Agrobacterium tumefaciens (strain C58)).